The primary structure comprises 180 residues: Large ribosomal subunit protein uL5 (180 aa).

Belongs to the universal ribosomal protein uL5 family. As to quaternary structure, part of the 50S ribosomal subunit; part of the 5S rRNA/L5/L18/L25 subcomplex. Contacts the 5S rRNA and the P site tRNA. Forms a bridge to the 30S subunit in the 70S ribosome.

In terms of biological role, this is one of the proteins that bind and probably mediate the attachment of the 5S RNA into the large ribosomal subunit, where it forms part of the central protuberance. In the 70S ribosome it contacts protein S13 of the 30S subunit (bridge B1b), connecting the 2 subunits; this bridge is implicated in subunit movement. Contacts the P site tRNA; the 5S rRNA and some of its associated proteins might help stabilize positioning of ribosome-bound tRNAs. This is Large ribosomal subunit protein uL5 from Streptococcus suis (strain 05ZYH33).